We begin with the raw amino-acid sequence, 102 residues long: uncharacterized protein (102 aa).

The helical transmembrane segment at 29–52 (IGSTYFCFGGAIFILVAPLTNLVY) threads the bilayer.

The protein resides in the membrane. This is an uncharacterized protein from Saccharomyces cerevisiae (strain ATCC 204508 / S288c) (Baker's yeast).